A 318-amino-acid chain; its full sequence is Ankyrin repeat domain-containing protein 1 (318 aa).

Residues 37–77 (ALEKQEDLKTTSKSLIELEEEKQIKEKQLKSELLKKKLEER) are a coiled coil. ANK repeat units lie at residues 118 to 147 (VDQT…DPNT), 151 to 180 (YKRT…NIEF), 184 to 213 (LEST…AINA), 217 to 246 (LLST…DLHA), 250 to 279 (EGDT…DLNI), and 283 to 314 (AGKT…KNSH).

It is found in the nucleus. In terms of biological role, may act as a nuclear transcription factor that negatively regulates the expression of cardiac genes. The sequence is that of Ankyrin repeat domain-containing protein 1 (ankrd1) from Xenopus tropicalis (Western clawed frog).